A 450-amino-acid chain; its full sequence is Phosphoglucosamine mutase 2 (450 aa).

The active-site Phosphoserine intermediate is Ser101. The Mg(2+) site is built by Ser101, Asp245, Asp247, and Asp249. A Phosphoserine modification is found at Ser101.

It belongs to the phosphohexose mutase family. It depends on Mg(2+) as a cofactor. Post-translationally, activated by phosphorylation.

It carries out the reaction alpha-D-glucosamine 1-phosphate = D-glucosamine 6-phosphate. Catalyzes the conversion of glucosamine-6-phosphate to glucosamine-1-phosphate. This is Phosphoglucosamine mutase 2 from Shewanella frigidimarina (strain NCIMB 400).